The primary structure comprises 192 residues: Adenylate kinase (192 aa).

10–18 serves as a coordination point for ATP; that stretch reads GVPGVGGTT.

Belongs to the archaeal adenylate kinase family. As to quaternary structure, monomer.

It is found in the cytoplasm. It catalyses the reaction AMP + ATP = 2 ADP. The protein is Adenylate kinase (adkA) of Methanothermococcus thermolithotrophicus (Methanococcus thermolithotrophicus).